Reading from the N-terminus, the 184-residue chain is Late embryogenesis abundant protein (184 aa).

The disordered stretch occupies residues 49–184 (TGNIAEYPTE…KLPGHHNHHP (136 aa)). The segment covering 60–86 (PPAGVAAGTGAAATTAAGVTTSETTTG) has biased composition (low complexity). 2 stretches are compositionally biased toward basic and acidic residues: residues 87–98 (QEHHGSLGEHLR) and 122–138 (KDKI…KDEQ). Over residues 139-159 (TPTTATTTGPTTTTTTTGAAA) the composition is skewed to low complexity. Positions 160–177 (DQHHEKKGILEKIKEKLP) are enriched in basic and acidic residues.

The protein belongs to the plant dehydrin family.

In terms of biological role, LEA protein are late embryogenesis abundant in higher plant seed embryos. There are two subsets of LEA proteins (5a, and 5b), the first ones are expressed when the cotyledon weight reach 80 mg and the second set are expressed above 100 mg. The function of those proteins is not known. In Raphanus sativus (Radish), this protein is Late embryogenesis abundant protein.